Consider the following 173-residue polypeptide: Photosystem I assembly protein Ycf3 (173 aa).

3 TPR repeats span residues 35-68 (AYIY…EENP), 72-105 (GETL…NPKQ), and 120-153 (GRSA…YPGG).

The protein belongs to the Ycf3 family.

The protein resides in the cellular thylakoid membrane. Essential for the assembly of the photosystem I (PSI) complex. May act as a chaperone-like factor to guide the assembly of the PSI subunits. This is Photosystem I assembly protein Ycf3 from Prochlorococcus marinus (strain MIT 9211).